Reading from the N-terminus, the 379-residue chain is Chaperone protein DnaJ (379 aa).

The J domain maps to 7–72 (DYYEVLGVDK…KKRSMYDQFG (66 aa)). A CR-type zinc finger spans residues 147 to 225 (GKKAELSYTR…CGGNGLERKK (79 aa)). 8 residues coordinate Zn(2+): Cys-160, Cys-163, Cys-177, Cys-180, Cys-199, Cys-202, Cys-213, and Cys-216. CXXCXGXG motif repeat units follow at residues 160–167 (CSECHGTG), 177–184 (CPDCKGTG), 199–206 (CPTCGGEG), and 213–220 (CKKCGGNG).

The protein belongs to the DnaJ family. In terms of assembly, homodimer. The cofactor is Zn(2+).

It is found in the cytoplasm. Functionally, participates actively in the response to hyperosmotic and heat shock by preventing the aggregation of stress-denatured proteins and by disaggregating proteins, also in an autonomous, DnaK-independent fashion. Unfolded proteins bind initially to DnaJ; upon interaction with the DnaJ-bound protein, DnaK hydrolyzes its bound ATP, resulting in the formation of a stable complex. GrpE releases ADP from DnaK; ATP binding to DnaK triggers the release of the substrate protein, thus completing the reaction cycle. Several rounds of ATP-dependent interactions between DnaJ, DnaK and GrpE are required for fully efficient folding. Also involved, together with DnaK and GrpE, in the DNA replication of plasmids through activation of initiation proteins. The protein is Chaperone protein DnaJ of Treponema denticola (strain ATCC 35405 / DSM 14222 / CIP 103919 / JCM 8153 / KCTC 15104).